A 263-amino-acid polypeptide reads, in one-letter code: Uridylate kinase (263 aa).

29–32 is a binding site for ATP; sequence KVSG. Glycine 71 contributes to the UMP binding site. Residues glycine 72 and arginine 76 each contribute to the ATP site. UMP-binding positions include aspartate 91 and 152–159; that span reads TGNPFFTT. The ATP site is built by threonine 179, glutamine 180, tyrosine 185, and aspartate 188.

Belongs to the UMP kinase family. As to quaternary structure, homohexamer.

The protein resides in the cytoplasm. It catalyses the reaction UMP + ATP = UDP + ADP. It functions in the pathway pyrimidine metabolism; CTP biosynthesis via de novo pathway; UDP from UMP (UMPK route): step 1/1. With respect to regulation, inhibited by UTP. Its function is as follows. Catalyzes the reversible phosphorylation of UMP to UDP. This chain is Uridylate kinase, found in Maricaulis maris (strain MCS10) (Caulobacter maris).